A 168-amino-acid chain; its full sequence is Group IIF secretory phospholipase A2 (168 aa).

An N-terminal signal peptide occupies residues 1–20 (MKKFFAIAVLAGSVVTTAHS). Cystine bridges form between C46–C138, C48–C64, C63–C120, C69–C145, C70–C113, C79–C106, and C98–C111. Positions 47, 49, and 51 each coordinate Ca(2+). H67 is a catalytic residue. D68 serves as a coordination point for Ca(2+). N-linked (GlcNAc...) asparagine glycans are attached at residues N92 and N102. D114 is an active-site residue. A required for localization on the plasma membrane region spans residues 139–168 (QGPTPNCSIYDPYPEEVTCGHGLPATPVST). N144 carries N-linked (GlcNAc...) asparagine glycosylation.

This sequence belongs to the phospholipase A2 family. Ca(2+) serves as cofactor. As to expression, strongly expressed in testis.

It is found in the secreted. Its subcellular location is the cell membrane. It carries out the reaction a 1,2-diacyl-sn-glycero-3-phosphocholine + H2O = a 1-acyl-sn-glycero-3-phosphocholine + a fatty acid + H(+). It catalyses the reaction 1-hexadecanoyl-2-(9Z-octadecenoyl)-sn-glycero-3-phospho-(1'-sn-glycerol) + H2O = 1-hexadecanoyl-sn-glycero-3-phospho-(1'-sn-glycerol) + (9Z)-octadecenoate + H(+). The enzyme catalyses 1-hexadecanoyl-2-(9Z,12Z-octadecadienoyl)-sn-glycero-3-phosphoethanolamine + H2O = 1-hexadecanoyl-sn-glycero-3-phosphoethanolamine + (9Z,12Z)-octadecadienoate + H(+). The catalysed reaction is 1-hexadecanoyl-2-(5Z,8Z,11Z,14Z-eicosatetraenoyl)-sn-glycero-3-phosphoethanolamine + H2O = 1-hexadecanoyl-sn-glycero-3-phosphoethanolamine + (5Z,8Z,11Z,14Z)-eicosatetraenoate + H(+). It carries out the reaction 1-hexadecanoyl-2-(9Z-octadecenoyl)-sn-glycero-3-phosphocholine + H2O = 1-hexadecanoyl-sn-glycero-3-phosphocholine + (9Z)-octadecenoate + H(+). It catalyses the reaction 1-hexadecanoyl-2-(9Z-octadecenoyl)-sn-glycero-3-phospho-L-serine + H2O = 1-hexadecanoyl-sn-glycero-3-phospho-L-serine + (9Z)-octadecenoate + H(+). Functionally, secretory calcium-dependent phospholipase A2 that primarily targets extracellular phospholipids. Hydrolyzes the ester bond of the fatty acyl group attached at the sn-2 position of phospholipids (phospholipase A2 activity), the catalytic efficiency decreasing in the following order: phosphatidylglycerols &gt; phosphatidylethanolamines &gt; phosphatidylcholines &gt; phosphatidylserines. May play a role in lipid mediator production in inflammatory conditions, by providing arachidonic acid to downstream cyclooxygenases and lipoxygenases. The sequence is that of Group IIF secretory phospholipase A2 (Pla2g2f) from Mus musculus (Mouse).